We begin with the raw amino-acid sequence, 196 residues long: Imidazole glycerol phosphate synthase subunit HisH (196 aa).

Residues 2 to 196 form the Glutamine amidotransferase type-1 domain; the sequence is NVVILDTGCA…AQLLKNFLEM (195 aa). Cysteine 77 acts as the Nucleophile in catalysis. Active-site residues include histidine 178 and glutamate 180.

In terms of assembly, heterodimer of HisH and HisF.

The protein localises to the cytoplasm. The enzyme catalyses 5-[(5-phospho-1-deoxy-D-ribulos-1-ylimino)methylamino]-1-(5-phospho-beta-D-ribosyl)imidazole-4-carboxamide + L-glutamine = D-erythro-1-(imidazol-4-yl)glycerol 3-phosphate + 5-amino-1-(5-phospho-beta-D-ribosyl)imidazole-4-carboxamide + L-glutamate + H(+). The catalysed reaction is L-glutamine + H2O = L-glutamate + NH4(+). It functions in the pathway amino-acid biosynthesis; L-histidine biosynthesis; L-histidine from 5-phospho-alpha-D-ribose 1-diphosphate: step 5/9. In terms of biological role, IGPS catalyzes the conversion of PRFAR and glutamine to IGP, AICAR and glutamate. The HisH subunit catalyzes the hydrolysis of glutamine to glutamate and ammonia as part of the synthesis of IGP and AICAR. The resulting ammonia molecule is channeled to the active site of HisF. The protein is Imidazole glycerol phosphate synthase subunit HisH of Salmonella choleraesuis (strain SC-B67).